Consider the following 259-residue polypeptide: Snake venom serine protease homolog rhinocerase 2 (259 aa).

The N-terminal stretch at 1–17 (VLIRVLANLLLLQLSYA) is a signal peptide. The propeptide occupies 18-23 (QESSEL). The Peptidase S1 domain maps to 24–250 (VIGGDECDIN…YTDWIEGIIA (227 aa)). Intrachain disulfides connect Cys-30-Cys-164, Cys-51-Cys-67, Cys-99-Cys-257, Cys-143-Cys-211, Cys-175-Cys-190, and Cys-201-Cys-226. Asn-252 carries N-linked (GlcNAc...) asparagine glycosylation.

It belongs to the peptidase S1 family. Snake venom subfamily. Expressed by the venom gland.

The protein localises to the secreted. Snake venom serine protease homolog that may act in the hemostasis system of the prey. This Bitis rhinoceros (West African gaboon viper) protein is Snake venom serine protease homolog rhinocerase 2.